We begin with the raw amino-acid sequence, 371 residues long: 4-hydroxyphenylpyruvate dioxygenase-like protein (371 aa).

VOC domains lie at 7–135 (RLCH…LLER) and 160–328 (RVDH…VFTK). Fe cation is bound by residues His-163, His-258, and Glu-339.

It belongs to the 4HPPD family. Fe cation is required as a cofactor.

Its subcellular location is the mitochondrion. It catalyses the reaction 3-(4-hydroxyphenyl)pyruvate + O2 = (S)-4-hydroxymandelate + CO2. Functionally, iron-dependent dioxygenase that catalyzes the conversion of 4-hydroxyphenylpyruvate (4-HPPA) to 4-hydroxymandelate (4-HMA) in the mitochondria, one of the steps in the biosynthesis of coenzyme Q10 from tyrosine. This chain is 4-hydroxyphenylpyruvate dioxygenase-like protein, found in Homo sapiens (Human).